Consider the following 197-residue polypeptide: UPF0637 protein LEUM_0496 (197 aa).

It belongs to the UPF0637 family.

The protein is UPF0637 protein LEUM_0496 of Leuconostoc mesenteroides subsp. mesenteroides (strain ATCC 8293 / DSM 20343 / BCRC 11652 / CCM 1803 / JCM 6124 / NCDO 523 / NBRC 100496 / NCIMB 8023 / NCTC 12954 / NRRL B-1118 / 37Y).